We begin with the raw amino-acid sequence, 378 residues long: Beta-1,3-N-acetylglucosaminyltransferase lunatic fringe (378 aa).

The Cytoplasmic segment spans residues 1–8 (MLQRCGRR). A helical; Signal-anchor for type II membrane protein membrane pass occupies residues 9–29 (LLLALVGALLACLLVLTADPP). The Lumenal segment spans residues 30 to 378 (PTPMPAERGR…TPWCPRSAIF (349 aa)). Residues 85–108 (RDADPPPGVASRQGDGHPRPPAEV) form a disordered region. Residue Arg128 participates in substrate binding. Residue Asn166 is glycosylated (N-linked (GlcNAc...) asparagine). 2 cysteine pairs are disulfide-bonded: Cys167–Cys178 and Cys196–Cys259. Asp200 contributes to the substrate binding site. Asp201 is a Mn(2+) binding site. Asp289 is a catalytic residue. His313 provides a ligand contact to Mn(2+). Cys363 and Cys372 are oxidised to a cystine.

This sequence belongs to the glycosyltransferase 31 family. Requires Mn(2+) as cofactor. Co(2+) is required as a cofactor. A soluble form may be derived from the membrane form by proteolytic processing. Detected at 12.5 dpc in all tissues examined with the highest level observed in adult brain and spleen. Detected in the dental epithelium.

Its subcellular location is the golgi apparatus. The protein resides in the golgi apparatus membrane. The catalysed reaction is 3-O-(alpha-L-fucosyl)-L-threonyl-[EGF-like domain protein] + UDP-N-acetyl-alpha-D-glucosamine = 3-O-(N-acetyl-beta-D-glucosaminyl-(1-&gt;3)-alpha-L-fucosyl)-L-threonyl-[EGF-like domain protein] + UDP + H(+). It catalyses the reaction 3-O-(alpha-L-fucosyl)-L-seryl-[EGF-like domain protein] + UDP-N-acetyl-alpha-D-glucosamine = 3-O-(N-acetyl-beta-D-glucosaminyl-(1-&gt;3)-alpha-L-fucosyl)-L-seryl-[EGF-like domain protein] + UDP + H(+). Functionally, glycosyltransferase that initiates the elongation of O-linked fucose residues attached to EGF-like repeats in the extracellular domain of Notch molecules. Modulates NOTCH1 activity by modifying O-fucose residues at specific EGF-like domains resulting in inhibition of NOTCH1 activation by JAG1 and enhancement of NOTCH1 activation by DLL1 via an increase in its binding to DLL1. Decreases the binding of JAG1 to NOTCH2 but not that of DLL1. Essential mediator of somite segmentation and patterning. During somite boundary formation, it restricts Notch activity in the presomitic mesoderm to a boundary-forming territory in the posterior half of the prospective somite. In this region, Notch function activates a set of genes that are involved in boundary formation and in anterior-posterior somite identity. Ectopically expressed in the thymus, Lfgn inhibits Notch signaling which results in inhibition of T-cell commitment and promotes B-cell development in lymphoid progenitors. May play a role in boundary formation of the enamel knot. The protein is Beta-1,3-N-acetylglucosaminyltransferase lunatic fringe of Mus musculus (Mouse).